Reading from the N-terminus, the 250-residue chain is Glucosamine-6-phosphate deaminase (250 aa).

Aspartate 67 (proton acceptor; for enolization step) is an active-site residue. Asparagine 136 acts as the For ring-opening step in catalysis. Catalysis depends on histidine 138, which acts as the Proton acceptor; for ring-opening step. Catalysis depends on glutamate 143, which acts as the For ring-opening step.

Belongs to the glucosamine/galactosamine-6-phosphate isomerase family. NagB subfamily.

It carries out the reaction alpha-D-glucosamine 6-phosphate + H2O = beta-D-fructose 6-phosphate + NH4(+). It functions in the pathway amino-sugar metabolism; N-acetylneuraminate degradation; D-fructose 6-phosphate from N-acetylneuraminate: step 5/5. Its function is as follows. Catalyzes the reversible isomerization-deamination of glucosamine 6-phosphate (GlcN6P) to form fructose 6-phosphate (Fru6P) and ammonium ion. The protein is Glucosamine-6-phosphate deaminase of Oceanobacillus iheyensis (strain DSM 14371 / CIP 107618 / JCM 11309 / KCTC 3954 / HTE831).